We begin with the raw amino-acid sequence, 263 residues long: Non-homologous end joining protein Ku 3 (263 aa).

Positions 6–169 (FGLVSVPVQL…WADEVRDPHR (164 aa)) constitute a Ku domain.

Belongs to the prokaryotic Ku family. As to quaternary structure, homodimer. Interacts with LigD.

Its function is as follows. With LigD forms a non-homologous end joining (NHEJ) DNA repair enzyme, which repairs dsDNA breaks with reduced fidelity. Binds linear dsDNA with 5'- and 3'- overhangs but not closed circular dsDNA nor ssDNA. Recruits and stimulates the ligase activity of LigD. The polypeptide is Non-homologous end joining protein Ku 3 (Saccharopolyspora erythraea (strain ATCC 11635 / DSM 40517 / JCM 4748 / NBRC 13426 / NCIMB 8594 / NRRL 2338)).